The chain runs to 407 residues: MDPTTSFPKDKIKILLLENIHIAAIKQFEEQGFQVESISSSLPEDKIIEKIKDVHVLGLRSKTKVTEKILSEAKRLLAIGCFCIGTDQVDLIEAEKRGVPVFNSPFCNSRSVAELIICEIITLSRKLGDRSTEMHNKIWRKESANCHEIRGKTLGIIGYGHIGSQLSVLAEAMGMSVLYYDIARRLPLGNSKMCPDMKTLLENSNFVTLHVPDTKETVGLIGEEEINTMKKGSYLLNASRGKVVQIPHLANALRSGHLAGAAVDVYPEEPSANCKDWECELQKCPNTILTPHIGGSTEEAQEAIGLEVSDLIVQFINSGASAGSVNFPEIALPVSPSTHRILNIHNNKPGVLRDINNILSEFNVSAQVLSTRKQIGYIIADVDSEASKEIKKKISSLPNSIKTRVLY.

Residues 161-162 (HI), aspartate 181, 238-240 (ASR), and aspartate 264 each bind NAD(+). Arginine 240 is an active-site residue. Glutamate 269 is a catalytic residue. The active-site Proton donor is histidine 292. 292-295 (HIGG) serves as a coordination point for NAD(+). The 68-residue stretch at 340–407 (RILNIHNNKP…PNSIKTRVLY (68 aa)) folds into the ACT domain.

It belongs to the D-isomer specific 2-hydroxyacid dehydrogenase family.

The enzyme catalyses (2R)-3-phosphoglycerate + NAD(+) = 3-phosphooxypyruvate + NADH + H(+). It catalyses the reaction (R)-2-hydroxyglutarate + NAD(+) = 2-oxoglutarate + NADH + H(+). The protein operates within amino-acid biosynthesis; L-serine biosynthesis; L-serine from 3-phospho-D-glycerate: step 1/3. Functionally, catalyzes the reversible oxidation of 3-phospho-D-glycerate to 3-phosphonooxypyruvate, the first step of the phosphorylated L-serine biosynthesis pathway. Also catalyzes the reversible oxidation of 2-hydroxyglutarate to 2-oxoglutarate. The protein is D-3-phosphoglycerate dehydrogenase (serA) of Dictyostelium discoideum (Social amoeba).